Consider the following 430-residue polypeptide: Serine--tRNA ligase (430 aa).

L-serine is bound at residue 237–239 (TAE). Residue 268–270 (RSE) participates in ATP binding. E291 serves as a coordination point for L-serine. 355–358 (EISS) is an ATP binding site. S391 provides a ligand contact to L-serine.

Belongs to the class-II aminoacyl-tRNA synthetase family. Type-1 seryl-tRNA synthetase subfamily. As to quaternary structure, homodimer. The tRNA molecule binds across the dimer.

The protein resides in the cytoplasm. It carries out the reaction tRNA(Ser) + L-serine + ATP = L-seryl-tRNA(Ser) + AMP + diphosphate + H(+). The enzyme catalyses tRNA(Sec) + L-serine + ATP = L-seryl-tRNA(Sec) + AMP + diphosphate + H(+). It functions in the pathway aminoacyl-tRNA biosynthesis; selenocysteinyl-tRNA(Sec) biosynthesis; L-seryl-tRNA(Sec) from L-serine and tRNA(Sec): step 1/1. Its function is as follows. Catalyzes the attachment of serine to tRNA(Ser). Is also able to aminoacylate tRNA(Sec) with serine, to form the misacylated tRNA L-seryl-tRNA(Sec), which will be further converted into selenocysteinyl-tRNA(Sec). In Klebsiella pneumoniae subsp. pneumoniae (strain ATCC 700721 / MGH 78578), this protein is Serine--tRNA ligase.